A 352-amino-acid chain; its full sequence is fMet-Leu-Phe receptor (352 aa).

Topologically, residues 1 to 27 are extracellular; that stretch reads MDSNASLPLNVSGGTQATPAGLVVLDV. N4 and N10 each carry an N-linked (GlcNAc...) asparagine glycan. The chain crosses the membrane as a helical span at residues 28–50; it reads FSYLILVVTFVLGVLGNGLVIWV. Over 51–61 the chain is Cytoplasmic; sequence TGFRMTHTVTT. The chain crosses the membrane as a helical span at residues 62–83; the sequence is ISYLNLALADFSFTSTLPFFIV. At 84 to 100 the chain is on the extracellular side; it reads TKALGGHWPFGWFLCKF. C98 and C178 are oxidised to a cystine. The helical transmembrane segment at 101 to 121 threads the bilayer; the sequence is VFTIVDINLFGSVFLIALIAL. Residues 122–140 are Cytoplasmic-facing; the sequence is DRCICVLHPVWAQNHRNVS. Residues 141-162 traverse the membrane as a helical segment; it reads LAKKVIVGPWICALLLTLPVII. The Extracellular portion of the chain corresponds to 163–207; it reads RVTTLSHPRAPGKMACTFDWSPWTEDPAEKLKVAISMFMVRGIIR. Residues 208–228 form a helical membrane-spanning segment; sequence FIIGFSTPMSIVAVCYGLIAT. Topologically, residues 229–244 are cytoplasmic; that stretch reads KIHRQGLIKSSRPLRV. A helical membrane pass occupies residues 245 to 268; sequence LSFVVASFLLCWSPYQIAALIATV. Residues 269 to 287 lie on the Extracellular side of the membrane; it reads RIRELLLGMGKDLRIVLDV. Residues 288–307 form a helical membrane-spanning segment; sequence TSFVAFFNSCLNPMLYVFMG. Topologically, residues 308-352 are cytoplasmic; that stretch reads QDFRERLIHSLPASLERALSEDSAQTSDTGTNSTSAPAEAELQAI.

The protein belongs to the G-protein coupled receptor 1 family. Post-translationally, phosphorylated; which is necessary for desensitization. Neutrophils.

It is found in the cell membrane. Functionally, high affinity receptor for N-formyl-methionyl peptides (fMLP), which are powerful neutrophil chemotactic factors. Binding of fMLP to the receptor stimulates intracellular calcium mobilization and superoxide anion release. This response is mediated via a G-protein that activates a phosphatidylinositol-calcium second messenger system. Receptor for TAFA4, mediates its effects on chemoattracting macrophages, promoting phagocytosis and increasing ROS release. Receptor for cathepsin CTSG, leading to increased phagocyte chemotaxis. The chain is fMet-Leu-Phe receptor (FPR1) from Oryctolagus cuniculus (Rabbit).